The following is a 124-amino-acid chain: MPTINQLVRKGRTPKVSKTKAPALKGSPMRRGVCTRVYTTTPKKPNSALRKVARVRLNGGVEVTAYIPGVGHNLQEHSIVLVRGGRVKDLPGVRYKIVRGALDTQGVKNRKQARSRYGAKMEKK.

The segment at 1–28 is disordered; that stretch reads MPTINQLVRKGRTPKVSKTKAPALKGSP. Basic residues predominate over residues 9 to 18; that stretch reads RKGRTPKVSK. Asp89 carries the post-translational modification 3-methylthioaspartic acid.

It belongs to the universal ribosomal protein uS12 family. In terms of assembly, part of the 30S ribosomal subunit. Contacts proteins S8 and S17. May interact with IF1 in the 30S initiation complex.

Functionally, with S4 and S5 plays an important role in translational accuracy. Interacts with and stabilizes bases of the 16S rRNA that are involved in tRNA selection in the A site and with the mRNA backbone. Located at the interface of the 30S and 50S subunits, it traverses the body of the 30S subunit contacting proteins on the other side and probably holding the rRNA structure together. The combined cluster of proteins S8, S12 and S17 appears to hold together the shoulder and platform of the 30S subunit. This Paenarthrobacter aurescens (strain TC1) protein is Small ribosomal subunit protein uS12.